The primary structure comprises 417 residues: Serine hydroxymethyltransferase (417 aa).

(6S)-5,6,7,8-tetrahydrofolate-binding positions include leucine 116 and 120-122 (GHL). An N6-(pyridoxal phosphate)lysine modification is found at lysine 225. 350–352 (SPF) contributes to the (6S)-5,6,7,8-tetrahydrofolate binding site.

This sequence belongs to the SHMT family. In terms of assembly, homodimer. It depends on pyridoxal 5'-phosphate as a cofactor.

The protein resides in the cytoplasm. The catalysed reaction is (6R)-5,10-methylene-5,6,7,8-tetrahydrofolate + glycine + H2O = (6S)-5,6,7,8-tetrahydrofolate + L-serine. Its pathway is one-carbon metabolism; tetrahydrofolate interconversion. It participates in amino-acid biosynthesis; glycine biosynthesis; glycine from L-serine: step 1/1. Its function is as follows. Catalyzes the reversible interconversion of serine and glycine with tetrahydrofolate (THF) serving as the one-carbon carrier. This reaction serves as the major source of one-carbon groups required for the biosynthesis of purines, thymidylate, methionine, and other important biomolecules. Also exhibits THF-independent aldolase activity toward beta-hydroxyamino acids, producing glycine and aldehydes, via a retro-aldol mechanism. The chain is Serine hydroxymethyltransferase from Ligilactobacillus salivarius (strain UCC118) (Lactobacillus salivarius).